The sequence spans 165 residues: E3 ubiquitin-protein ligase RNF181 (165 aa).

An RING-type; atypical zinc finger spans residues 88 to 129; the sequence is CPVCLLEFEAEETVIEMPCHHLFHSNCILPWLSKTNSCPLCR. Residues 136 to 165 are disordered; it reads DDSYEEHKKDKARRQQQQHRLENLHGAMYT. At threonine 165 the chain carries Phosphothreonine.

It belongs to the RNF181 family. Directly interacts with ITGA2B and, as a result, with integrin ITGA2B/ITGB3. There is no evidence that integrin ITGA2B/ITGB3 is an endogenous substrate for RNF181-directed ubiquitination. Auto-ubiquitinated as part of the enzymatic reaction.

It catalyses the reaction S-ubiquitinyl-[E2 ubiquitin-conjugating enzyme]-L-cysteine + [acceptor protein]-L-lysine = [E2 ubiquitin-conjugating enzyme]-L-cysteine + N(6)-ubiquitinyl-[acceptor protein]-L-lysine.. The protein operates within protein modification; protein ubiquitination. Functionally, E3 ubiquitin-protein ligase which accepts ubiquitin from an E2 ubiquitin-conjugating enzyme in the form of a thioester and then directly transfers the ubiquitin to targeted substrates. Catalyzes monoubiquitination of 26S proteasome subunit PSMC2/RPT1. The sequence is that of E3 ubiquitin-protein ligase RNF181 from Mus musculus (Mouse).